Reading from the N-terminus, the 84-residue chain is Putative membrane protein insertion efficiency factor (84 aa).

The disordered stretch occupies residues 63–84 (LGGSGYDPPPPPKTPRKWKCEE).

Belongs to the UPF0161 family.

It is found in the cell inner membrane. In terms of biological role, could be involved in insertion of integral membrane proteins into the membrane. The protein is Putative membrane protein insertion efficiency factor of Caulobacter sp. (strain K31).